A 190-amino-acid chain; its full sequence is MAKEKKEEVKEEEVSEATSTEGSTDVESTNNDDLTTETQATTALDDIKKVEAERDELSDKYIRAQAEIVNMRRRNEKEQASLIKYDGQKLAKAILPALDNLERALAVESASEQLLKGVKMVQTDLLKALKENHVAEIEAEGQAFDPNMHQAVQTVPADDDHPADTVVQVLQKGYILKDRVLRPAMVIVAQ.

The segment at 1–40 (MAKEKKEEVKEEEVSEATSTEGSTDVESTNNDDLTTETQA) is disordered. The span at 22 to 40 (GSTDVESTNNDDLTTETQA) shows a compositional bias: polar residues.

It belongs to the GrpE family. As to quaternary structure, homodimer.

The protein resides in the cytoplasm. Participates actively in the response to hyperosmotic and heat shock by preventing the aggregation of stress-denatured proteins, in association with DnaK and GrpE. It is the nucleotide exchange factor for DnaK and may function as a thermosensor. Unfolded proteins bind initially to DnaJ; upon interaction with the DnaJ-bound protein, DnaK hydrolyzes its bound ATP, resulting in the formation of a stable complex. GrpE releases ADP from DnaK; ATP binding to DnaK triggers the release of the substrate protein, thus completing the reaction cycle. Several rounds of ATP-dependent interactions between DnaJ, DnaK and GrpE are required for fully efficient folding. This is Protein GrpE from Pediococcus pentosaceus (strain ATCC 25745 / CCUG 21536 / LMG 10740 / 183-1w).